A 106-amino-acid chain; its full sequence is UPF0145 protein BDI_2732 (106 aa).

The protein belongs to the UPF0145 family.

This is UPF0145 protein BDI_2732 from Parabacteroides distasonis (strain ATCC 8503 / DSM 20701 / CIP 104284 / JCM 5825 / NCTC 11152).